The following is a 26-amino-acid chain: Hemocyanin subunit B (26 aa).

It belongs to the tyrosinase family. Hemocyanin subfamily. As to expression, hemolymph.

It is found in the secreted. It localises to the extracellular space. Hemocyanins are copper-containing oxygen carriers occurring freely dissolved in the hemolymph of many mollusks and arthropods. The protein is Hemocyanin subunit B of Carcinus maenas (Common shore crab).